Reading from the N-terminus, the 100-residue chain is Urease subunit gamma (100 aa).

The protein belongs to the urease gamma subunit family. Heterotrimer of UreA (gamma), UreB (beta) and UreC (alpha) subunits. Three heterotrimers associate to form the active enzyme.

The protein resides in the cytoplasm. The catalysed reaction is urea + 2 H2O + H(+) = hydrogencarbonate + 2 NH4(+). It functions in the pathway nitrogen metabolism; urea degradation; CO(2) and NH(3) from urea (urease route): step 1/1. The polypeptide is Urease subunit gamma (Nostoc punctiforme (strain ATCC 29133 / PCC 73102)).